Reading from the N-terminus, the 1182-residue chain is DNA-directed RNA polymerase subunit beta (1182 aa).

A compositionally biased stretch (acidic residues) spans 1150–1162 (DEEVEMKDEDDDN). Positions 1150 to 1182 (DEEVEMKDEDDDNIPNATSALEQVVQPTVTEEE) are disordered. The span at 1171–1182 (EQVVQPTVTEEE) shows a compositional bias: low complexity.

It belongs to the RNA polymerase beta chain family. As to quaternary structure, the RNAP catalytic core consists of 2 alpha, 1 beta, 1 beta' and 1 omega subunit. When a sigma factor is associated with the core the holoenzyme is formed, which can initiate transcription.

The catalysed reaction is RNA(n) + a ribonucleoside 5'-triphosphate = RNA(n+1) + diphosphate. In terms of biological role, DNA-dependent RNA polymerase catalyzes the transcription of DNA into RNA using the four ribonucleoside triphosphates as substrates. The polypeptide is DNA-directed RNA polymerase subunit beta (Exiguobacterium sp. (strain ATCC BAA-1283 / AT1b)).